The primary structure comprises 208 residues: Holliday junction resolvase RecU (208 aa).

Mg(2+) contacts are provided by threonine 87, aspartate 89, glutamate 102, and glutamine 121.

This sequence belongs to the RecU family. The cofactor is Mg(2+).

Its subcellular location is the cytoplasm. The catalysed reaction is Endonucleolytic cleavage at a junction such as a reciprocal single-stranded crossover between two homologous DNA duplexes (Holliday junction).. Endonuclease that resolves Holliday junction intermediates in genetic recombination. Cleaves mobile four-strand junctions by introducing symmetrical nicks in paired strands. Promotes annealing of linear ssDNA with homologous dsDNA. Required for DNA repair, homologous recombination and chromosome segregation. In Staphylococcus aureus (strain Mu3 / ATCC 700698), this protein is Holliday junction resolvase RecU.